Consider the following 338-residue polypeptide: NAD kinase (338 aa).

Residue Asp-66 is the Proton acceptor of the active site. NAD(+) is bound by residues 66 to 67 (DG), Arg-71, 141 to 142 (ND), Lys-152, Asp-171, 182 to 187 (TAYAFS), and Ala-206. The disordered stretch occupies residues 317–338 (GDAGVAGTEPDKPGERDGKAGA). A compositionally biased stretch (basic and acidic residues) spans 325–338 (EPDKPGERDGKAGA).

It belongs to the NAD kinase family. A divalent metal cation is required as a cofactor.

It localises to the cytoplasm. The enzyme catalyses NAD(+) + ATP = ADP + NADP(+) + H(+). Involved in the regulation of the intracellular balance of NAD and NADP, and is a key enzyme in the biosynthesis of NADP. Catalyzes specifically the phosphorylation on 2'-hydroxyl of the adenosine moiety of NAD to yield NADP. The polypeptide is NAD kinase (Bifidobacterium longum subsp. infantis (strain ATCC 15697 / DSM 20088 / JCM 1222 / NCTC 11817 / S12)).